Consider the following 298-residue polypeptide: MPSLKEVQLKIKGVKQTKKITKAMNMVATSKLRGAQTNMEAFRPYAEKFAEVLGSLAAKAGEETSPLLVPKESVKRVNVVLCTSDRGLCGGFNTNLVRMANAYLKRCQEKEIEVSFTHFGKKGRDWCRKMTDCERKSEYLGVVGARFGFNVAVTAGRELINGFLNGDYDEVHVIYSEFQGMAKQLPVIRQLLPIPPIETADSPASDGGEDYLAEHICEPSPDEILDAMLPKNVFIQIYSALLETSTSEHAARMAAMDNASKACNDMINELTLLYNKARQAAITAELMDIVGGAEALKG.

Belongs to the ATPase gamma chain family. F-type ATPases have 2 components, CF(1) - the catalytic core - and CF(0) - the membrane proton channel. CF(1) has five subunits: alpha(3), beta(3), gamma(1), delta(1), epsilon(1). CF(0) has three main subunits: a, b and c.

The protein localises to the cell inner membrane. In terms of biological role, produces ATP from ADP in the presence of a proton gradient across the membrane. The gamma chain is believed to be important in regulating ATPase activity and the flow of protons through the CF(0) complex. The sequence is that of ATP synthase gamma chain from Desulfosudis oleivorans (strain DSM 6200 / JCM 39069 / Hxd3) (Desulfococcus oleovorans).